The sequence spans 304 residues: Mas-related G-protein coupled receptor member A1 (304 aa).

At 1–17 the chain is on the extracellular side; the sequence is MDNTIPGGINITILIPN. An N-linked (GlcNAc...) asparagine glycan is attached at Asn-10. A helical membrane pass occupies residues 18 to 38; it reads LMIIIFGLVGLTGNGIVFWLL. The Cytoplasmic portion of the chain corresponds to 39–53; that stretch reads GFCLHRNAFSVYILN. The chain crosses the membrane as a helical span at residues 54 to 74; sequence LALADFFFLLGHIIDSILLLL. Asn-75 is a topological domain (extracellular). Residues 76 to 96 traverse the membrane as a helical segment; sequence VFYPITFLLCFYTIMMVLYIA. The Cytoplasmic segment spans residues 97–131; it reads GLSMLSAISTERCLSVLCPIWYHCHRPEHTSTVMC. A helical transmembrane segment spans residues 132 to 152; sequence AVIWVLSLLICILNSYFCGFL. Residues 153-166 are Extracellular-facing; that stretch reads NTQYKNENGCLALN. Residues 167-187 traverse the membrane as a helical segment; sequence FFTAAYLMFLFVVLCLSSLAL. Residues 188–206 lie on the Cytoplasmic side of the membrane; the sequence is VARLFCGTGQIKLTRLYVT. Residues 207–227 form a helical membrane-spanning segment; the sequence is IILSILVFLLCGLPFGIHWFL. The Extracellular portion of the chain corresponds to 228 to 243; that stretch reads LFKIKDDFHVFDLGFY. Residues 244-264 form a helical membrane-spanning segment; that stretch reads LASVVLTAINSCANPIIYFFV. The Cytoplasmic portion of the chain corresponds to 265-304; it reads GSFRHRLKHQTLKMVLQNALQDTPETAKIMVEMSRSKSEP.

This sequence belongs to the G-protein coupled receptor 1 family. Mas subfamily. Expressed in a subset of sensory neurons that includes nociceptors. Expressed in the subclass of non-peptidergic sensory neurons that are IB4(+) and VR1(-).

It is found in the cell membrane. Its function is as follows. Orphan receptor activated by a subset of RFamide-family neuropeptides such as FLRF-amide and FMRF-amide. Mediates its action by association with G proteins that activate a phosphatidylinositol-calcium second messenger system. Its effect is mediated by G(q) and G(11) proteins. May regulate the function of nociceptive neurons by modulation of pain perception. This Mus musculus (Mouse) protein is Mas-related G-protein coupled receptor member A1 (Mrgpra1).